Consider the following 158-residue polypeptide: Transcription elongation factor GreA (158 aa).

The stretch at 47–74 (NSEYDEAKNEQAFTEGRIIQLENMLKNA) forms a coiled coil.

Belongs to the GreA/GreB family.

In terms of biological role, necessary for efficient RNA polymerase transcription elongation past template-encoded arresting sites. The arresting sites in DNA have the property of trapping a certain fraction of elongating RNA polymerases that pass through, resulting in locked ternary complexes. Cleavage of the nascent transcript by cleavage factors such as GreA or GreB allows the resumption of elongation from the new 3'terminus. GreA releases sequences of 2 to 3 nucleotides. This chain is Transcription elongation factor GreA, found in Clostridium perfringens (strain ATCC 13124 / DSM 756 / JCM 1290 / NCIMB 6125 / NCTC 8237 / Type A).